Reading from the N-terminus, the 270-residue chain is Ribosomal RNA small subunit methyltransferase A (270 aa).

Residues histidine 11, leucine 13, glycine 38, glutamate 59, aspartate 84, and asparagine 109 each contribute to the S-adenosyl-L-methionine site.

It belongs to the class I-like SAM-binding methyltransferase superfamily. rRNA adenine N(6)-methyltransferase family. RsmA subfamily.

The protein resides in the cytoplasm. It catalyses the reaction adenosine(1518)/adenosine(1519) in 16S rRNA + 4 S-adenosyl-L-methionine = N(6)-dimethyladenosine(1518)/N(6)-dimethyladenosine(1519) in 16S rRNA + 4 S-adenosyl-L-homocysteine + 4 H(+). Specifically dimethylates two adjacent adenosines (A1518 and A1519) in the loop of a conserved hairpin near the 3'-end of 16S rRNA in the 30S particle. May play a critical role in biogenesis of 30S subunits. The sequence is that of Ribosomal RNA small subunit methyltransferase A from Crocosphaera subtropica (strain ATCC 51142 / BH68) (Cyanothece sp. (strain ATCC 51142)).